A 323-amino-acid polypeptide reads, in one-letter code: Conjugal transfer protein TrbB (323 aa).

151–158 contacts ATP; sequence GGTGSGKT.

The protein belongs to the GSP E family.

It is found in the cytoplasm. This Rhizobium radiobacter (Agrobacterium tumefaciens) protein is Conjugal transfer protein TrbB (trbB).